We begin with the raw amino-acid sequence, 419 residues long: Interferon regulatory factor 3 (419 aa).

T3 is modified (phosphothreonine). The segment at residues 5–111 (KPRILPWLIS…DPHKIYEFVT (107 aa)) is a DNA-binding region (IRF tryptophan pentad repeat). A Phosphoserine modification is found at S14. Position 75 is a phosphothreonine (T75). Phosphoserine is present on residues S97 and S123. The disordered stretch occupies residues 118–137 (PEPDTSLDLSGRYSTSDTHE). Residues 140-419 (LDKLLSGMDL…LRDLVEDMDF (280 aa)) form a mediates interaction with ZDHHC11 region. K191 participates in a covalent cross-link: Glycyl lysine isopeptide (Lys-Gly) (interchain with G-Cter in ISG15). The segment at 198–358 (DEWEFQVTVF…SWPQDEPWVK (161 aa)) is interaction with HERC5. Phosphothreonine occurs at positions 235 and 251. An intrachain disulfide couples C265 to C287. Glycyl lysine isopeptide (Lys-Gly) (interchain with G-Cter in ISG15) cross-links involve residues K358 and K364. K364 is subject to N6-acetyllysine. Phosphoserine is present on S383. S384 is subject to Diphosphoserine. A Phosphoserine; by TBK1 modification is found at S384. Residue S394 is modified to Phosphoserine; by IKKE. At S396 the chain carries Phosphoserine. At T402 the chain carries Phosphothreonine.

This sequence belongs to the IRF family. In terms of assembly, monomer. Homodimer; phosphorylation-induced. Interacts (when phosphorylated) with CREBBP. Interacts with MAVS (via phosphorylated pLxIS motif). Interacts with TICAM1 (via phosphorylated pLxIS motif). Interacts with STING1 (via phosphorylated pLxIS motif). Interacts with IKBKE and TBK1. Interacts with TICAM2. Interacts with RBCK1. Interacts with HERC5. Interacts with DDX3X; the interaction allows the phosphorylation and activation of IRF3 by IKBKE. Interacts with TRIM21 and ULK1, in the presence of TRIM21; this interaction leads to IRF3 degradation by autophagy. Interacts with RIOK3; RIOK3 probably mediates the interaction of TBK1 with IRF3. Interacts with ILRUN; the interaction inhibits IRF3 binding to its DNA consensus sequence. Interacts with LYAR; this interaction impairs IRF3 DNA-binding activity. Interacts with TRAF3. Interacts with ZDHHC11; ZDHHC11 recruits IRF3 to STING1 upon DNA virus infection and thereby promotes IRF3 activation. Interacts with HSP90AA1; the interaction mediates IRF3 association with TOMM70. Interacts with BCL2; the interaction decreases upon Sendai virus infection. Interacts with BAX; the interaction is direct, increases upon virus infection and mediates the formation of the apoptosis complex TOMM70:HSP90AA1:IRF3:BAX. Interacts with DDX56. Interacts with NBR1. As to quaternary structure, (Microbial infection) Interacts with Porcine epidemic diarrhea virus E protein; this interaction prevents IRF3 translocation to the nucleus and thereby prevents type I interferon production. (Microbial infection) Interacts with African swine fever virus (ASFV) P14.5/E120R; this interaction interferes with the recruitment of IRF3 to TBK1, which in turn suppresses IRF3 phosphorylation, decreasing interferon production via the cGAS/STING pathway. In terms of assembly, (Microbial infection) Interacts with African swine fever virus (ASFV) MGF360-14L; this interaction mediates degradation of IRF3 through TRIM21 and ubiquitin-meditated proteolysis. As to quaternary structure, (Microbial infection) Interacts with African swine fever virus (ASFV) E301R; this interaction inhibits nuclear translocation of IRF3 to the nucleus. (Microbial infection) Interacts with African swine fever virus (ASFV) minor capsid protein M1249L; this interaction mediates IRF3 degradation. Post-translationally, constitutively phosphorylated on many Ser/Thr residues. Activated following phosphorylation by TBK1 and IKBKE. Innate adapter proteins, such as MAVS, STING1 or TICAM1, are first activated by viral RNA, cytosolic DNA, and bacterial lipopolysaccharide (LPS), respectively, leading to activation of the kinases TBK1 and IKBKE. These kinases then phosphorylate the adapter proteins on the pLxIS motif, leading to recruitment of IRF3, thereby licensing IRF3 for phosphorylation by TBK1. Phosphorylation at Ser-384 is followed by pyrophosphorylation at the same residue, promoting phosphorylation at Ser-394. Phosphorylated IRF3 dissociates from the adapter proteins, dimerizes, and then enters the nucleus to induce IFNs. Pyrophosphorylated by UAP1 following phosphorylation at Ser-384 by TBK1. Pyrophosphorylation promotes subsequent phosphorylation at Ser-394, leading to homodimerization of IRF3. In terms of processing, acetylation at Lys-364 by KAT8 inhibits recruimtent to promoters and transcription factor activity. Acetylation by KAT8 is promoted by phosphorylation at Ser-394. Post-translationally, ubiquitinated; ubiquitination involves RBCK1 leading to proteasomal degradation. Polyubiquitinated; ubiquitination involves TRIM21 leading to proteasomal degradation. Ubiquitinated by UBE3C, leading to its degradation. Deubiquitinated by USP5 on both 'Lys-48'-linked unanchored and 'Lys-63'-linked anchored polyubiquitin, leading to inhibition of antiviral innate immunity. ISGylated by HERC5 resulting in sustained IRF3 activation and in the inhibition of IRF3 ubiquitination by disrupting PIN1 binding. The phosphorylation state of IRF3 does not alter ISGylation. In terms of processing, (Microbial infection) Phosphorylated by pseudorabies virus protein kinase UL13; leading to decreased IRF3 binding to the IRF3-responsive promoters and downstream ISG expression. Post-translationally, proteolytically cleaved by apoptotic caspases during apoptosis, leading to its inactivation. Cleavage by CASP3 during virus-induced apoptosis inactivates it, preventing cytokine overproduction.

It is found in the cytoplasm. It localises to the nucleus. The protein localises to the mitochondrion. Its activity is regulated as follows. In the absence of viral infection, maintained as a monomer in an autoinhibited state. Phosphorylation by TBK1 and IKBKE disrupts this autoinhibition leading to the liberation of the DNA-binding and dimerization activities and its nuclear localization where it can activate type I IFN and ISG genes. Phosphorylation and activation follow the following steps: innate adapter proteins, such as MAVS, STING1 or TICAM1, are first activated by viral RNA, cytosolic DNA and bacterial lipopolysaccharide (LPS), respectively, leading to activation of the kinases TBK1 and IKBKE. These kinases then phosphorylate the adapter proteins on their pLxIS motif, leading to recruitment of IRF3, thereby licensing IRF3 for phosphorylation by TBK1. Phosphorylated IRF3 dissociates from the adapter proteins, dimerizes, and then enters the nucleus to induce IFNs. Its function is as follows. Key transcriptional regulator of type I interferon (IFN)-dependent immune responses which plays a critical role in the innate immune response against DNA and RNA viruses. Regulates the transcription of type I IFN genes (IFN-alpha and IFN-beta) and IFN-stimulated genes (ISG) by binding to an interferon-stimulated response element (ISRE) in their promoters. Acts as a more potent activator of the IFN-beta (IFNB) gene than the IFN-alpha (IFNA) gene and plays a critical role in both the early and late phases of the IFNA/B gene induction. Found in an inactive form in the cytoplasm of uninfected cells and following viral infection, double-stranded RNA (dsRNA), or toll-like receptor (TLR) signaling, is phosphorylated by IKBKE and TBK1 kinases. This induces a conformational change, leading to its dimerization and nuclear localization and association with CREB binding protein (CREBBP) to form dsRNA-activated factor 1 (DRAF1), a complex which activates the transcription of the type I IFN and ISG genes. Can activate distinct gene expression programs in macrophages and can induce significant apoptosis in primary macrophages. This Sus scrofa (Pig) protein is Interferon regulatory factor 3 (IRF3).